Here is a 404-residue protein sequence, read N- to C-terminus: uncharacterized protein (404 aa).

The span at 262-278 (VSTGDTSPCGTEDSSPA) shows a compositional bias: polar residues. Disordered stretches follow at residues 262–307 (VSTG…SPSL) and 319–340 (MKKSHSANDSEEFFREDDSGAD). Phosphoserine occurs at positions 268, 276, and 279. Phosphothreonine is present on residues Thr290 and Thr293. Residues Ser304, Ser306, Ser324, Ser358, and Ser362 each carry the phosphoserine modification. The segment covering 319–336 (MKKSHSANDSEEFFREDD) has biased composition (basic and acidic residues).

This is an uncharacterized protein from Mus musculus (Mouse).